Reading from the N-terminus, the 284-residue chain is MTKILDGKKIASILREELKQDIITLKERGIEPKLAVVLVGEDPASVAYAKFLQKVSENAGVLFELHQLSKSTAEEEIICKIEDLNQIQAVHGILMMMPLPPHVNKQHIMEHISPLKDVDGLHPFNRGHLISGGICLHPATPTSCLEILKRSGITLAGKHIVVVGRGETVGKPLVFMALAENATVTVCHSRTVDLGKFTKQADIIISAVGKPGLITADMIKPGAVVVDAGIHEEAGNIIGDVDYEQVKEIAEAITPVPGGVGSLTTVLMLKNVLKGIQLQIGTQE.

Residues 164–166 (GRG), Ser-189, and Ile-230 contribute to the NADP(+) site.

Belongs to the tetrahydrofolate dehydrogenase/cyclohydrolase family. Homodimer.

It catalyses the reaction (6R)-5,10-methylene-5,6,7,8-tetrahydrofolate + NADP(+) = (6R)-5,10-methenyltetrahydrofolate + NADPH. It carries out the reaction (6R)-5,10-methenyltetrahydrofolate + H2O = (6R)-10-formyltetrahydrofolate + H(+). Its pathway is one-carbon metabolism; tetrahydrofolate interconversion. Functionally, catalyzes the oxidation of 5,10-methylenetetrahydrofolate to 5,10-methenyltetrahydrofolate and then the hydrolysis of 5,10-methenyltetrahydrofolate to 10-formyltetrahydrofolate. In Desulforamulus reducens (strain ATCC BAA-1160 / DSM 100696 / MI-1) (Desulfotomaculum reducens), this protein is Bifunctional protein FolD.